Reading from the N-terminus, the 398-residue chain is Probable pectate lyase P56 (398 aa).

An N-terminal signal peptide occupies residues 1–27 (MEYSYRTKINVLFIVLILFVFAALGTA). Asn135 is a glycosylation site (N-linked (GlcNAc...) asparagine). Asp192, Asp217, and Asp221 together coordinate Ca(2+). A glycan (N-linked (GlcNAc...) asparagine) is linked at Asn228. Arg273 is a catalytic residue.

This sequence belongs to the polysaccharide lyase 1 family. It depends on Ca(2+) as a cofactor. In terms of tissue distribution, expressed in anthers and pollen.

The enzyme catalyses Eliminative cleavage of (1-&gt;4)-alpha-D-galacturonan to give oligosaccharides with 4-deoxy-alpha-D-galact-4-enuronosyl groups at their non-reducing ends.. It functions in the pathway glycan metabolism; pectin degradation; 2-dehydro-3-deoxy-D-gluconate from pectin: step 2/5. Functionally, might be needed during pollen development and tube growth. The polypeptide is Probable pectate lyase P56 (LAT56) (Solanum lycopersicum (Tomato)).